An 828-amino-acid chain; its full sequence is Periplasmic nitrate reductase (828 aa).

A signal peptide (tat-type signal) is located at residues Met-1–Ala-31. A 4Fe-4S Mo/W bis-MGD-type domain is found at Ile-39–Asp-95. [4Fe-4S] cluster contacts are provided by Cys-46, Cys-49, Cys-53, and Cys-81. Residues Lys-83, Gln-150, Asn-175, Cys-179, Trp-212–Met-219, Ser-243–His-247, Gln-262–Asp-264, Met-372, Gln-376, Asn-482, Ser-508–Asp-509, Lys-531, Asp-558, and Thr-718–Thr-727 each bind Mo-bis(molybdopterin guanine dinucleotide). A substrate-binding site is contributed by Phe-794. Mo-bis(molybdopterin guanine dinucleotide) contacts are provided by Asn-802 and Lys-819.

It belongs to the prokaryotic molybdopterin-containing oxidoreductase family. NasA/NapA/NarB subfamily. As to quaternary structure, component of the periplasmic nitrate reductase NapAB complex composed of NapA and NapB. [4Fe-4S] cluster serves as cofactor. Mo-bis(molybdopterin guanine dinucleotide) is required as a cofactor. In terms of processing, predicted to be exported by the Tat system. The position of the signal peptide cleavage has not been experimentally proven.

The protein resides in the periplasm. The enzyme catalyses 2 Fe(II)-[cytochrome] + nitrate + 2 H(+) = 2 Fe(III)-[cytochrome] + nitrite + H2O. In terms of biological role, catalytic subunit of the periplasmic nitrate reductase complex NapAB. Receives electrons from NapB and catalyzes the reduction of nitrate to nitrite. The polypeptide is Periplasmic nitrate reductase (Salmonella dublin (strain CT_02021853)).